Consider the following 335-residue polypeptide: Protein STRICTOSIDINE SYNTHASE-LIKE 12 (335 aa).

A signal peptide spans 1 to 22; that stretch reads MTSFCSMISLLLLLSLSSAVFS. The N-linked (GlcNAc...) asparagine glycan is linked to N80.

This sequence belongs to the strictosidine synthase family.

The protein resides in the vacuole. The enzyme catalyses 3alpha(S)-strictosidine + H2O = secologanin + tryptamine. The protein operates within alkaloid biosynthesis; 3alpha(S)-strictosidine biosynthesis; 3alpha(S)-strictosidine from secologanin and tryptamine: step 1/1. Its function is as follows. Catalyzes the stereospecific condensation of tryptamine with secologanin to form strictosidine, the key intermediate of indole alkaloid biosynthesis. This is Protein STRICTOSIDINE SYNTHASE-LIKE 12 from Arabidopsis thaliana (Mouse-ear cress).